Consider the following 574-residue polypeptide: K(+)/H(+) antiporter NhaP2 (574 aa).

Transmembrane regions (helical) follow at residues 6–26, 34–54, 58–78, 87–107, 109–129, 173–193, 196–216, 219–239, 242–262, 271–291, 299–319, 335–355, and 359–379; these read INSF…LSPV, ILLI…GGIL, YSTA…DGGM, VALW…TSIT, VMAA…GAIV, IAIL…ISFI, FGLG…LVNL, LAEG…YAAS, LGGS…NKPT, VLDG…GLLL, IWLP…PLAV, WFIS…VFPM, and LPGA…SLLV. Residues 405–486 form the RCK C-terminal domain; that stretch reads SGVEIYPSSE…LEALSNLFSQ (82 aa).

Belongs to the monovalent cation:proton antiporter 1 (CPA1) transporter (TC 2.A.36) family. NhaP2 subfamily.

The protein localises to the cell inner membrane. The enzyme catalyses K(+)(in) + H(+)(out) = K(+)(out) + H(+)(in). K(+)/H(+) antiporter that extrudes potassium in exchange for external protons and maintains the internal concentration of potassium under toxic levels. This is K(+)/H(+) antiporter NhaP2 from Shewanella sp. (strain MR-7).